The sequence spans 151 residues: Cyanate hydratase (151 aa).

Active-site residues include Arg92, Glu95, and Ser118.

This sequence belongs to the cyanase family.

It carries out the reaction cyanate + hydrogencarbonate + 3 H(+) = NH4(+) + 2 CO2. Its function is as follows. Catalyzes the reaction of cyanate with bicarbonate to produce ammonia and carbon dioxide. This is Cyanate hydratase from Coprinopsis cinerea (strain Okayama-7 / 130 / ATCC MYA-4618 / FGSC 9003) (Inky cap fungus).